A 398-amino-acid chain; its full sequence is 2-epi-5-epi-valiolone synthase (398 aa).

Residues Asp62, 93-96 (ETVK), 126-130 (GVLMD), 150-151 (TT), Lys163, Lys172, and 190-193 (FLAT) each bind NAD(+). Lys163 is a catalytic residue. The a divalent metal cation site is built by Glu205, His276, and His292.

Belongs to the sugar phosphate cyclases superfamily. EEVS family. NAD(+) is required as a cofactor. The cofactor is Co(2+).

It carries out the reaction D-sedoheptulose 7-phosphate = 2-epi-5-epi-valiolone + phosphate. Its function is as follows. Catalyzes the cyclization of D-sedoheptulose 7-phosphate to 2-epi-5-epi-valiolone. Does not use ido-heptulose 7-phosphate and 3-deoxy-arabino-heptulosonate 7-phosphate. Involved in the biosynthesis of the acarviose moiety of the alpha-glucosidase inhibitor acarbose. The chain is 2-epi-5-epi-valiolone synthase from Actinoplanes sp. (strain ATCC 31044 / CBS 674.73 / SE50/110).